The primary structure comprises 86 residues: Large ribosomal subunit protein bL27 (86 aa).

The disordered stretch occupies residues 1–31 (MAHKKAGGSSRNGRDSAGQRRGVKKFGGEPV).

This sequence belongs to the bacterial ribosomal protein bL27 family.

The polypeptide is Large ribosomal subunit protein bL27 (Desulfotalea psychrophila (strain LSv54 / DSM 12343)).